A 486-amino-acid chain; its full sequence is MASLMIQGCGSDVGKSTLVAGLCRLFVNRGLIVRPFKPQNMSNNAAVTEDGGEIGRAQALQAIACRTPPTVHMNPVLLKPQSDVGAQVVVRGKVVGAYQARAFQGLKPDLLATTVESYRLLAAEADLVLVEGAGSPAETNLRAGDIANMGFAHAADVPVALIGDIDRGHVIAALAGAHLVLDAADRERIKGFIINKFRGDPSLFDEGRREIVARTGWPDLGMAPWLASARALPAEDAVALERPVREDGGRRAKIVVPMLSRIANFDEFDPLRADPSLDFSFLPPGTPVPGDADLVILPGTKATLADLTFLRAQGWDIDILAHARRGGRVLGVCGGYQMLGRTVSDPEGVEGAPGSAPGLGLLDVETVLLGDKVLRATAGRLVGTDAAFSGYEMHIGRTTGQGAARPMLAFDGGAADGAVSADGRVAGAYVHGLFERGEARAALLAPLGVAASSGDHAAQVDAALDEIAAVLERSLDIEAIARIAGV.

The 189-residue stretch at 251–439 (RAKIVVPMLS…VHGLFERGEA (189 aa)) folds into the GATase cobBQ-type domain. Cysteine 333 functions as the Nucleophile in the catalytic mechanism. Histidine 431 is an active-site residue.

This sequence belongs to the CobB/CobQ family. CobQ subfamily.

The protein operates within cofactor biosynthesis; adenosylcobalamin biosynthesis. Its function is as follows. Catalyzes amidations at positions B, D, E, and G on adenosylcobyrinic A,C-diamide. NH(2) groups are provided by glutamine, and one molecule of ATP is hydrogenolyzed for each amidation. The polypeptide is Cobyric acid synthase (Caulobacter sp. (strain K31)).